Reading from the N-terminus, the 473-residue chain is UDP-glycosyltransferase 71A27 (473 aa).

Residue H15 is the Proton acceptor of the active site. H15 is an an anthocyanidin binding site. Residue D117 is the Charge relay of the active site. UDP-alpha-D-glucose is bound by residues A345, Q347, H362, W365, N366, S367, and E370. G385 provides a ligand contact to an anthocyanidin. 2 residues coordinate UDP-alpha-D-glucose: E386 and Q387.

This sequence belongs to the UDP-glycosyltransferase family.

It carries out the reaction (20S)-protopanaxadiol + UDP-alpha-D-glucose = (20S)-ginsenoside C-K + UDP + H(+). Its pathway is secondary metabolite biosynthesis; terpenoid biosynthesis. Component of the triterpene saponins (e.g. PPD-type ginsenosides or panaxosides) biosynthetic pathways. Glycosyltransferase that catalyzes the biosynthesis of compound K from protopanaxadiol (PPD). The chain is UDP-glycosyltransferase 71A27 from Panax ginseng (Korean ginseng).